A 278-amino-acid chain; its full sequence is MAAAAGGGAAPFVWKTYRMVEDPGTDGVIGWGKGNNSFVVADPFVFSQTLLPAHFKHNNFSSFVRQLNTYGFRKVDPDRWEFAHASFLRGQTHLLRNIVRRGSAAAGGGGGGGGGKRRDASADGGGGGGDEDMTMVATEVVRLKQEQRTIDDRVAAMWRRVQETERRPKQMLAFLLKVVGDRDKLHRLVGGGGNGNGAATAAAADNGFADAARAGCGEKRARLLLDGDNTGAFGPDAVDFAGFYTGADMFPDVAVDAAAAAAGGSAGCSFAFGVDSGY.

Positions Ala-105 to Gly-114 are enriched in gly residues. The segment at Ala-105–Asp-132 is disordered. The hydrophobic repeat HR-A/B stretch occupies residues Leu-143–Val-179. The Nuclear localization signal signature appears at Lys-219–Arg-222.

Belongs to the HSF family. Class C subfamily. As to quaternary structure, homotrimer. Exhibits temperature-dependent phosphorylation.

Its subcellular location is the nucleus. In terms of biological role, transcriptional regulator that specifically binds DNA of heat shock promoter elements (HSE). The polypeptide is Heat stress transcription factor C-2b (HSFC2B) (Oryza sativa subsp. japonica (Rice)).